The sequence spans 303 residues: Putative S-adenosyl-L-methionine-dependent methyltransferase MSMEG_1479/MSMEI_1443 (303 aa).

S-adenosyl-L-methionine contacts are provided by residues aspartate 130 and 159 to 160 (DL).

The protein belongs to the UPF0677 family.

Its function is as follows. Exhibits S-adenosyl-L-methionine-dependent methyltransferase activity. In Mycolicibacterium smegmatis (strain ATCC 700084 / mc(2)155) (Mycobacterium smegmatis), this protein is Putative S-adenosyl-L-methionine-dependent methyltransferase MSMEG_1479/MSMEI_1443.